A 341-amino-acid polypeptide reads, in one-letter code: Enduracididine beta-hydroxylase (341 aa).

2 residues coordinate Fe cation: H146 and E148. The segment at 203–223 is disordered; sequence HRIHGKAPGDESARESALRER. Residue H300 participates in Fe cation binding.

Belongs to the clavaminate synthase family. Requires Fe(2+) as cofactor.

It carries out the reaction L-enduracididine + 2-oxoglutarate + O2 = (3S)-3-hydroxy-L-enduracididine + succinate + CO2. It participates in antibiotic biosynthesis. Hydroxylates the beta carbon of free L-enduracididine to produce (3S)-3-hydroxy-L-enduracididine in biosynthesis of the nonproteinogenic amino acid beta-hydroxyenduracididine, a component of antibiotic mannopeptimycin. This Streptomyces hygroscopicus protein is Enduracididine beta-hydroxylase (mppO).